Consider the following 492-residue polypeptide: N-succinylglutamate 5-semialdehyde dehydrogenase (492 aa).

220–225 (GSASTG) is an NAD(+) binding site. Residues Glu243 and Cys277 contribute to the active site.

Belongs to the aldehyde dehydrogenase family. AstD subfamily.

The catalysed reaction is N-succinyl-L-glutamate 5-semialdehyde + NAD(+) + H2O = N-succinyl-L-glutamate + NADH + 2 H(+). It participates in amino-acid degradation; L-arginine degradation via AST pathway; L-glutamate and succinate from L-arginine: step 4/5. Functionally, catalyzes the NAD-dependent reduction of succinylglutamate semialdehyde into succinylglutamate. The protein is N-succinylglutamate 5-semialdehyde dehydrogenase of Salmonella gallinarum (strain 287/91 / NCTC 13346).